The primary structure comprises 289 residues: ATP synthase gamma chain (289 aa).

It belongs to the ATPase gamma chain family. In terms of assembly, F-type ATPases have 2 components, CF(1) - the catalytic core - and CF(0) - the membrane proton channel. CF(1) has five subunits: alpha(3), beta(3), gamma(1), delta(1), epsilon(1). CF(0) has three main subunits: a, b and c.

The protein resides in the cell inner membrane. Produces ATP from ADP in the presence of a proton gradient across the membrane. The gamma chain is believed to be important in regulating ATPase activity and the flow of protons through the CF(0) complex. This chain is ATP synthase gamma chain, found in Azoarcus sp. (strain BH72).